The primary structure comprises 595 residues: 3-hydroxy-3-methylglutaryl-coenzyme A reductase 2 (595 aa).

The N-linked (GlcNAc...) asparagine glycan is linked to asparagine 35. A run of 2 helical transmembrane segments spans residues 48-68 (LPLY…MYFL) and 92-112 (AIVS…IGFV). Positions 113–183 (QTFVSRGNND…SPLITPASSE (71 aa)) are linker. The N-linked (GlcNAc...) asparagine glycan is linked to asparagine 121. Positions 184–595 (EDEEIINSVV…KYNRSTKASS (412 aa)) are catalytic. Glutamate 278 acts as the Charge relay system in catalysis. N-linked (GlcNAc...) asparagine glycosylation occurs at asparagine 342. Lysine 410 acts as the Charge relay system in catalysis. The N-linked (GlcNAc...) asparagine glycan is linked to asparagine 455. Residue aspartate 486 is the Charge relay system of the active site. Histidine 584 serves as the catalytic Proton donor. Residue asparagine 588 is glycosylated (N-linked (GlcNAc...) asparagine).

Belongs to the HMG-CoA reductase family. As to expression, expressed in young flowers and in mature sepals and ovaries.

The protein resides in the endoplasmic reticulum membrane. The catalysed reaction is (R)-mevalonate + 2 NADP(+) + CoA = (3S)-3-hydroxy-3-methylglutaryl-CoA + 2 NADPH + 2 H(+). Its pathway is metabolic intermediate biosynthesis; (R)-mevalonate biosynthesis; (R)-mevalonate from acetyl-CoA: step 3/3. In terms of biological role, catalyzes the synthesis of mevalonate. The specific precursor of all isoprenoid compounds present in plants. The chain is 3-hydroxy-3-methylglutaryl-coenzyme A reductase 2 (HMG2) from Solanum tuberosum (Potato).